Consider the following 379-residue polypeptide: UDP-4-amino-4-deoxy-L-arabinose--oxoglutarate aminotransferase (379 aa).

Lys182 carries the post-translational modification N6-(pyridoxal phosphate)lysine.

Belongs to the DegT/DnrJ/EryC1 family. ArnB subfamily. Homodimer. Requires pyridoxal 5'-phosphate as cofactor.

The catalysed reaction is UDP-4-amino-4-deoxy-beta-L-arabinose + 2-oxoglutarate = UDP-beta-L-threo-pentopyranos-4-ulose + L-glutamate. Its pathway is nucleotide-sugar biosynthesis; UDP-4-deoxy-4-formamido-beta-L-arabinose biosynthesis; UDP-4-deoxy-4-formamido-beta-L-arabinose from UDP-alpha-D-glucuronate: step 2/3. The protein operates within bacterial outer membrane biogenesis; lipopolysaccharide biosynthesis. Functionally, catalyzes the conversion of UDP-4-keto-arabinose (UDP-Ara4O) to UDP-4-amino-4-deoxy-L-arabinose (UDP-L-Ara4N). The modified arabinose is attached to lipid A and is required for resistance to polymyxin and cationic antimicrobial peptides. The sequence is that of UDP-4-amino-4-deoxy-L-arabinose--oxoglutarate aminotransferase from Klebsiella pneumoniae (strain 342).